Reading from the N-terminus, the 549-residue chain is Glucose-6-phosphate isomerase (549 aa).

Residue glutamate 355 is the Proton donor of the active site. Active-site residues include histidine 387 and lysine 515.

The protein belongs to the GPI family.

It localises to the cytoplasm. The catalysed reaction is alpha-D-glucose 6-phosphate = beta-D-fructose 6-phosphate. It functions in the pathway carbohydrate biosynthesis; gluconeogenesis. The protein operates within carbohydrate degradation; glycolysis; D-glyceraldehyde 3-phosphate and glycerone phosphate from D-glucose: step 2/4. Functionally, catalyzes the reversible isomerization of glucose-6-phosphate to fructose-6-phosphate. This Haemophilus influenzae (strain ATCC 51907 / DSM 11121 / KW20 / Rd) protein is Glucose-6-phosphate isomerase.